The chain runs to 401 residues: MYLEKLSLTDFRSYAQVDLTLEPGVTVLVGYNGIGKTNLMEAIGYLATLSSHRVSSDAPLLRFGTERALIRAKLVRGGQSTVLELEINGSRANRGRINRSNPVRARDILGICQTVLFAPEDLALVKGDPSNRRRFLDELLVSLMPRHSATRTDYDRVLKQRNALLKSGRSGKFTAGHEATLDVWDQHMARAGAELLYARLELVERIRPHLKAAYAQLTDGSKEADAIYRSTLQGILDDDGAGAGYAAEPAAVERVEDLRALSVEELTQRYVQAFAASRRKELERGISLVGPHRDDVELILGEAPAKGYASHGETWSMCLSLRLASYYVMLDDARTGGSAPILILDDVFAELDVQRRRKLAAIVSGAEQVLVTAAVDADIPDELAGRRVKVVPGGIDESESR.

An ATP-binding site is contributed by Gly30–Thr37.

Belongs to the RecF family.

The protein localises to the cytoplasm. Functionally, the RecF protein is involved in DNA metabolism; it is required for DNA replication and normal SOS inducibility. RecF binds preferentially to single-stranded, linear DNA. It also seems to bind ATP. In Arthrobacter sp. (strain FB24), this protein is DNA replication and repair protein RecF.